We begin with the raw amino-acid sequence, 507 residues long: MSKFPVPLRTIGGLRPSTTAAISAANIGFTQSSRALSTGAAAKSSGLVGQVARQYPNAAAFSIKQVRLYSSGNLPKHNRVALPALSPTMELGTVVSWQKKEGDQLSEGDLLCEIETDKATMGFETPEEGYLAKILIQEGSKDVPIGKLLCIIVDNEADVAAFKDFKDDGASSGGSAPAAEKAPEPAKPAASSQPSPPAQMYQAPSVPKSAPIPHSSSGRVSASPFAKKLAAENGLDLSGVSGSGPGGRILASDLSQAPAKGATSTTTQAVSGQDYTDIPLSNMRKTIAKRLTESKSTIPHYYLTSEIQLDTLLQVREKLNGLLAKGTSGQATKISINDFIIKASALACQRVPEANSYWMDSFIRENHHVDVSVAVSTPAGLITPIIFNAHAKGLATIASEIVELAQRAREGKLQPHEFQGGTFTVSNLGMFGSVSDFTAIINPPQSCILAIGGASDKLVPDEAEGYKKIKTMKVTLSCDHRTVDGAVGAVWLRHFKEFLEKPHTMLL.

Residues 77–153 enclose the Lipoyl-binding domain; sequence HNRVALPALS…PIGKLLCIIV (77 aa). Position 118 is an N6-lipoyllysine (lysine 118). Disordered regions lie at residues 168–223 and 248–270; these read DGAS…VSAS and RILA…TQAV. The Peripheral subunit-binding (PSBD) domain maps to 221-258; sequence SASPFAKKLAAENGLDLSGVSGSGPGGRILASDLSQAP. Residues histidine 480 and aspartate 484 contribute to the active site.

The protein belongs to the 2-oxoacid dehydrogenase family. It depends on (R)-lipoate as a cofactor.

It localises to the mitochondrion matrix. The catalysed reaction is N(6)-[(R)-dihydrolipoyl]-L-lysyl-[protein] + acetyl-CoA = N(6)-[(R)-S(8)-acetyldihydrolipoyl]-L-lysyl-[protein] + CoA. In terms of biological role, the pyruvate dehydrogenase complex catalyzes the overall conversion of pyruvate to acetyl-CoA and CO(2). It contains multiple copies of three enzymatic components: pyruvate dehydrogenase (E1), dihydrolipoamide acetyltransferase (E2) and lipoamide dehydrogenase (E3). This Caenorhabditis elegans protein is Dihydrolipoyllysine-residue acetyltransferase component of pyruvate dehydrogenase complex, mitochondrial.